The sequence spans 262 residues: Type III pantothenate kinase (262 aa).

7-14 lines the ATP pocket; that stretch reads DIGNTRLK. Substrate-binding positions include Tyr96 and 103-106; that span reads GSDR. Asp105 functions as the Proton acceptor in the catalytic mechanism. Thr137 contacts ATP. Thr187 is a binding site for substrate.

The protein belongs to the type III pantothenate kinase family. In terms of assembly, homodimer. Requires NH4(+) as cofactor. The cofactor is K(+).

The protein localises to the cytoplasm. The enzyme catalyses (R)-pantothenate + ATP = (R)-4'-phosphopantothenate + ADP + H(+). The protein operates within cofactor biosynthesis; coenzyme A biosynthesis; CoA from (R)-pantothenate: step 1/5. Its function is as follows. Catalyzes the phosphorylation of pantothenate (Pan), the first step in CoA biosynthesis. The protein is Type III pantothenate kinase of Leptothrix cholodnii (strain ATCC 51168 / LMG 8142 / SP-6) (Leptothrix discophora (strain SP-6)).